Here is a 465-residue protein sequence, read N- to C-terminus: Trigger factor (465 aa).

A PPIase FKBP-type domain is found at 164–245; the sequence is GDFVSIDLSA…VQSVKERELP (82 aa). The interval 430-465 is disordered; it reads GNTVDTAEMFGEPAAEPEQADAAQAGDAEKAAADSE. Residues 440 to 455 show a composition bias toward low complexity; that stretch reads GEPAAEPEQADAAQAG. Basic and acidic residues predominate over residues 456 to 465; that stretch reads DAEKAAADSE.

Belongs to the FKBP-type PPIase family. Tig subfamily.

Its subcellular location is the cytoplasm. The catalysed reaction is [protein]-peptidylproline (omega=180) = [protein]-peptidylproline (omega=0). Its function is as follows. Involved in protein export. Acts as a chaperone by maintaining the newly synthesized protein in an open conformation. Functions as a peptidyl-prolyl cis-trans isomerase. The polypeptide is Trigger factor (Nocardia farcinica (strain IFM 10152)).